The following is a 96-amino-acid chain: Large ribosomal subunit protein bL28 (96 aa).

The segment at 1-23 is disordered; that stretch reads MSRVCELSGKAPMTGNTVSHANN.

It belongs to the bacterial ribosomal protein bL28 family.

In Cereibacter sphaeroides (strain ATCC 17029 / ATH 2.4.9) (Rhodobacter sphaeroides), this protein is Large ribosomal subunit protein bL28.